A 166-amino-acid chain; its full sequence is tRNA-acetylating toxin (166 aa).

A disordered region spans residues 1–22; sequence MSGYSAPRRISDADDVTSFSSG. One can recognise an N-acetyltransferase domain in the interval 1–162; that stretch reads MSGYSAPRRI…LMLLMKDARA (162 aa). Tyrosine 138 is a catalytic residue.

This sequence belongs to the acetyltransferase family. GNAT subfamily. Homodimer, forms a complex with cognate antitoxin TacA.

It catalyses the reaction glycyl-tRNA(Gly) + acetyl-CoA = N-acetylglycyl-tRNA(Gly) + CoA + H(+). Functionally, toxic component of a type II toxin-antitoxin (TA) system. Overexpression of this gene alone in M.smegmatis inhibits growth, while overexpression of the tacA-tacT operon does not. Acetylates glycyl-tRNA(Gly) but not other tRNAs, blocks in vitro translation in the presence, but not absence, of acetyl-coenzyme A. Peptidyl-tRNA hydrolase (pth) counteracts the product of this enzyme in vitro. Neutralized by cognate antitoxin TacA. Does not seem to be active in laboratory growth conditions. TacA-TacT both represses and derepresses expression of its own operon. The sequence is that of tRNA-acetylating toxin from Mycobacterium tuberculosis (strain ATCC 25618 / H37Rv).